We begin with the raw amino-acid sequence, 356 residues long: MSTVTITDLARENVRNLTPYQSARRLGGNGDVWLNANEYPTAVEFQLTQQTLNRYPECQPKAVIENYAQYAGVKPEQVLVSRGADEGIELLIRAFCEPGKDAILYCPPTYGMYSVSAETIGVECRTVPTLENWQLDLQGISDKLDGVKVVYVCSPNNPTGQLINPQDFRTLLELTRGKAIVVADEAYIEFCPQASLVGWLAEYPHLAILRTLSKAFALAGLRCGFTLANEEVINLLMKVIAPYPLSTPVADIAAQALSPQGIVAMRERVAQIIAEREYLIAALKEIPCVEQVFDSETNYILARFKASSAVFKSLWDQGIILRDQNKQPSLSGCLRITVGTREESQRVIDALRAEQV.

Residue K214 is modified to N6-(pyridoxal phosphate)lysine.

The protein belongs to the class-II pyridoxal-phosphate-dependent aminotransferase family. Histidinol-phosphate aminotransferase subfamily. Homodimer. Pyridoxal 5'-phosphate is required as a cofactor.

It catalyses the reaction L-histidinol phosphate + 2-oxoglutarate = 3-(imidazol-4-yl)-2-oxopropyl phosphate + L-glutamate. It functions in the pathway amino-acid biosynthesis; L-histidine biosynthesis; L-histidine from 5-phospho-alpha-D-ribose 1-diphosphate: step 7/9. This Escherichia coli O45:K1 (strain S88 / ExPEC) protein is Histidinol-phosphate aminotransferase.